Consider the following 705-residue polypeptide: Elongation factor G (705 aa).

Residues 8-289 (VNYRNIGISA…TVINYLPSPK (282 aa)) form the tr-type G domain. Residues 17–24 (AHIDAGKT), 88–92 (DTPGH), and 142–145 (NKMD) contribute to the GTP site.

The protein belongs to the TRAFAC class translation factor GTPase superfamily. Classic translation factor GTPase family. EF-G/EF-2 subfamily.

It localises to the cytoplasm. In terms of biological role, catalyzes the GTP-dependent ribosomal translocation step during translation elongation. During this step, the ribosome changes from the pre-translocational (PRE) to the post-translocational (POST) state as the newly formed A-site-bound peptidyl-tRNA and P-site-bound deacylated tRNA move to the P and E sites, respectively. Catalyzes the coordinated movement of the two tRNA molecules, the mRNA and conformational changes in the ribosome. In Wigglesworthia glossinidia brevipalpis, this protein is Elongation factor G.